We begin with the raw amino-acid sequence, 547 residues long: MARYVFITGGVVSSLGKGLASAALGALLQARGFSVRLRKLDPYLNVDPGTMSPFEHGEVFVTDDGAETDLDLGHYERFTGVSARKTDSVSSGRIYSNVLEKERRGDYLGKTIQVIPHVTNEIKDFLRVGEDEVDFMLCEIGGTVGDIEGLPFFEAIRQFAQDKPRGQCIFVHLTLLPYVSASGELKTKPTQHSVKELRSIGIAPDVLLLRSERAIPEKEREKIALFCNVRKEAVIAAYDLKTIYEAPLAYHREGLDQAVLDAFGISPAPKPNLDRWVDVMDRLENAEGEVRVAIVGKYTQLEDAYKSIAEALTHGGMANRTRVRAEWINAELFEREDPSPFLEGFHAILVPGGFGERGTEGKIRAAQYAREKAIPYLGICLGMQMAVIEAARNLAQVKDAGSEEFDHEVGKKRFTPVVYHLKEWIQGNHIVERKHDDDKGGTMRLGAYTAALTPGSRVSEIYHATEIEERHRHRYEVDVRYREALEGCGLTFSGMSPDGRLPEIVEIKDHPWFIGVQFHPELKSKPFAPHPLFADFVRAAVEVSRLV.

The amidoligase domain stretch occupies residues 1–265 (MARYVFITGG…DQAVLDAFGI (265 aa)). Ser13 provides a ligand contact to CTP. Ser13 is a UTP binding site. ATP-binding positions include 14–19 (SLGKGL) and Asp71. Positions 71 and 139 each coordinate Mg(2+). Residues 146-148 (DIE), 186-191 (KTKPTQ), and Lys222 each bind CTP. UTP contacts are provided by residues 186–191 (KTKPTQ) and Lys222. In terms of domain architecture, Glutamine amidotransferase type-1 spans 291 to 546 (RVAIVGKYTQ…VRAAVEVSRL (256 aa)). Residue Gly353 coordinates L-glutamine. The active-site Nucleophile; for glutamine hydrolysis is the Cys380. L-glutamine is bound by residues 381-384 (LGMQ), Glu404, and Arg474. Active-site residues include His519 and Glu521.

The protein belongs to the CTP synthase family. As to quaternary structure, homotetramer.

The enzyme catalyses UTP + L-glutamine + ATP + H2O = CTP + L-glutamate + ADP + phosphate + 2 H(+). It catalyses the reaction L-glutamine + H2O = L-glutamate + NH4(+). The catalysed reaction is UTP + NH4(+) + ATP = CTP + ADP + phosphate + 2 H(+). Its pathway is pyrimidine metabolism; CTP biosynthesis via de novo pathway; CTP from UDP: step 2/2. Its activity is regulated as follows. Allosterically activated by GTP, when glutamine is the substrate; GTP has no effect on the reaction when ammonia is the substrate. The allosteric effector GTP functions by stabilizing the protein conformation that binds the tetrahedral intermediate(s) formed during glutamine hydrolysis. Inhibited by the product CTP, via allosteric rather than competitive inhibition. Catalyzes the ATP-dependent amination of UTP to CTP with either L-glutamine or ammonia as the source of nitrogen. Regulates intracellular CTP levels through interactions with the four ribonucleotide triphosphates. The polypeptide is CTP synthase (Cereibacter sphaeroides (strain ATCC 17023 / DSM 158 / JCM 6121 / CCUG 31486 / LMG 2827 / NBRC 12203 / NCIMB 8253 / ATH 2.4.1.) (Rhodobacter sphaeroides)).